We begin with the raw amino-acid sequence, 336 residues long: Glyceraldehyde-3-phosphate dehydrogenase (336 aa).

NAD(+) contacts are provided by residues 12-13, Asp34, Arg78, and Thr121; that span reads RI. D-glyceraldehyde 3-phosphate is bound by residues 151 to 153, Thr182, Arg199, 212 to 213, and Arg235; these read SCT and TG. Cys152 acts as the Nucleophile in catalysis. Asn316 contacts NAD(+).

The protein belongs to the glyceraldehyde-3-phosphate dehydrogenase family. As to quaternary structure, homotetramer.

It localises to the cytoplasm. The enzyme catalyses D-glyceraldehyde 3-phosphate + phosphate + NAD(+) = (2R)-3-phospho-glyceroyl phosphate + NADH + H(+). Its pathway is carbohydrate degradation; glycolysis; pyruvate from D-glyceraldehyde 3-phosphate: step 1/5. Its function is as follows. Catalyzes the oxidative phosphorylation of glyceraldehyde 3-phosphate (G3P) to 1,3-bisphosphoglycerate (BPG) using the cofactor NAD. The first reaction step involves the formation of a hemiacetal intermediate between G3P and a cysteine residue, and this hemiacetal intermediate is then oxidized to a thioester, with concomitant reduction of NAD to NADH. The reduced NADH is then exchanged with the second NAD, and the thioester is attacked by a nucleophilic inorganic phosphate to produce BPG. The protein is Glyceraldehyde-3-phosphate dehydrogenase (gap) of Streptococcus dysgalactiae subsp. equisimilis (Streptococcus equisimilis).